The chain runs to 343 residues: Ubiquitin thioesterase OTU1 (343 aa).

The tract at residues 45-123 (RCKAKGGTHL…IVEEDQTRPK (79 aa)) is UBX-like. The region spanning 144–269 (LTRTAVPADN…GIHYDPLQRN (126 aa)) is the OTU domain. A cys-loop region spans residues 149–155 (VPADNSC). Residue Asp152 is part of the active site. Cys155 functions as the Nucleophile in the catalytic mechanism. Positions 208-218 (IRRDDTWGGAI) are variable-loop. Residues 258–262 (YDGIH) form a his-loop region. Ile261 is a binding site for substrate. His262 is an active-site residue. Residues 286–291 (DIVLVQ) form an S2 site region. The C2H2-type zinc-finger motif lies at 313–337 (LRCMICQKGLTGQAEARDHARETGH). His337 is an active-site residue.

As to quaternary structure, interacts with VCP; the interaction is direct. Interacts with FAF2/UBXD8. Interacts with DERL1; however interaction is dependent on the UBAX-like region, suggesting that it may be indirect. Interacts with PLAA, UBXN6 and VCP; may form a complex involved in macroautophagy.

It is found in the cytoplasm. The catalysed reaction is Thiol-dependent hydrolysis of ester, thioester, amide, peptide and isopeptide bonds formed by the C-terminal Gly of ubiquitin (a 76-residue protein attached to proteins as an intracellular targeting signal).. Its function is as follows. Hydrolase that can remove conjugated ubiquitin from proteins and participates in endoplasmic reticulum-associated degradation (ERAD) for misfolded lumenal proteins. May act by triming the ubiquitin chain on the associated substrate to facilitate their threading through the VCP/p97 pore. Ubiquitin moieties on substrates may present a steric impediment to the threading process when the substrate is transferred to the VCP pore and threaded through VCP's axial channel. Mediates deubiquitination of 'Lys-27'-, 'Lys-29'- and 'Lys-33'-linked polyubiquitin chains. Also able to hydrolyze 'Lys-11'-linked ubiquitin chains. Cleaves both polyubiquitin and di-ubiquitin. May play a role in macroautophagy, regulating for instance the clearance of damaged lysosomes. May recruit PLAA, UBXN6 and VCP to damaged lysosome membranes decorated with K48-linked ubiquitin chains and remove these chains allowing autophagosome formation. This chain is Ubiquitin thioesterase OTU1 (Yod1), found in Mus musculus (Mouse).